We begin with the raw amino-acid sequence, 186 residues long: Intraflagellar transport protein 27 homolog (186 aa).

Residues 12 to 19 (GDPAVGKT), 64 to 68 (DSAGK), and 123 to 126 (TKTD) each bind GTP.

It belongs to the small GTPase superfamily. Rab family. Component of the IFT complex B, at least composed of IFT20, IFT22, IFT25, IFT27, IFT46, IFT52, TRAF3IP1/IFT54, IFT57, IFT74, IFT80, IFT81, and IFT88. Interacts with IFT25. Interacts with IFT70B. Interacts with RABL2/RABL2A; binding is equal in the presence of GTP or GDP. Interacts with IFT88. Interacts with ARL6; recognizes and binds with the GTP-free form of ARL6. Expressed predominantly in the testis (at protein level). Co-localizes with RABL2/RABL2A in the midpiece of elongated spermatids within the testis (at protein level).

The protein localises to the cell projection. It localises to the cilium. The protein resides in the cytoplasm. Its subcellular location is the flagellum. Functionally, small GTPase-like component of the intraflagellar transport (IFT) complex B that promotes the exit of the BBSome complex from cilia via its interaction with ARL6. Not involved in entry of the BBSome complex into cilium. Prevents aggregation of GTP-free ARL6. Required for hedgehog signaling. Forms a subcomplex within the IFT complex B with IFT25. Its role in intraflagellar transport is mainly seen in tissues rich in ciliated cells such as kidney and testis. Essential for male fertility, spermiogenesis and sperm flagella formation. Plays a role in the early development of the kidney. May be involved in the regulation of ureteric bud initiation. This Mus musculus (Mouse) protein is Intraflagellar transport protein 27 homolog (Ift27).